The primary structure comprises 499 residues: Anaerobic nitric oxide reductase flavorubredoxin (499 aa).

Residues 30–210 (TKGTSYNSYL…PFSALVTAKI (181 aa)) are zinc metallo-hydrolase. Fe cation-binding residues include histidine 79, glutamate 81, aspartate 83, histidine 147, aspartate 166, and histidine 227. A Flavodoxin-like domain is found at 254 to 393 (ITLFYDSMSN…LCREHGQFIA (140 aa)). FMN-binding positions include 260–264 (SMSNN) and 342–369 (AFGS…ETAV). One can recognise a Rubredoxin-like domain in the interval 447–498 (KQCMLCTVCNWVYDPEIGEPNQGVEPNTAWIDVPDYFLCPECNLGKDVFVEV). Cysteine 452, cysteine 455, cysteine 485, and cysteine 488 together coordinate Fe cation.

It in the N-terminal section; belongs to the zinc metallo-hydrolase group 3 family. As to quaternary structure, homotetramer. Fe cation serves as cofactor. The cofactor is FMN.

The protein resides in the cytoplasm. It functions in the pathway nitrogen metabolism; nitric oxide reduction. Its function is as follows. Anaerobic nitric oxide reductase; uses NADH to detoxify nitric oxide (NO), protecting several 4Fe-4S NO-sensitive enzymes. Has at least 2 reductase partners, only one of which (NorW, flavorubredoxin reductase) has been identified. NO probably binds to the di-iron center; electrons enter from the NorW at rubredoxin and are transferred sequentially to the FMN center and the di-iron center. Also able to function as an aerobic oxygen reductase. The chain is Anaerobic nitric oxide reductase flavorubredoxin from Aliivibrio salmonicida (strain LFI1238) (Vibrio salmonicida (strain LFI1238)).